Consider the following 618-residue polypeptide: Medium-chain acyl-CoA ligase ACSF2, mitochondrial (618 aa).

Residues 1 to 44 constitute a mitochondrion transit peptide; it reads MRATAAYVGMLRLGRMCAGSPGVLGARAALSRSWQEARLQAVRF. Position 182 is an N6-acetyllysine (lysine 182). Lysine 185 is modified (N6-acetyllysine; alternate). Position 185 is an N6-succinyllysine; alternate (lysine 185). ATP is bound at residue 266–274; it reads TSGTTGSPK. An N6-acetyllysine mark is found at lysine 343 and lysine 401. Lysine 481 bears the N6-succinyllysine mark. 2 residues coordinate ATP: aspartate 496 and arginine 511. N6-acetyllysine is present on lysine 513. Lysine 547 and lysine 573 each carry N6-acetyllysine; alternate. Residues lysine 547 and lysine 573 each carry the N6-succinyllysine; alternate modification. Lysine 602 contributes to the ATP binding site. N6-succinyllysine is present on lysine 602.

It belongs to the ATP-dependent AMP-binding enzyme family.

Its subcellular location is the mitochondrion. The catalysed reaction is a medium-chain fatty acid + ATP + CoA = a medium-chain fatty acyl-CoA + AMP + diphosphate. The enzyme catalyses octanoate + ATP + CoA = octanoyl-CoA + AMP + diphosphate. Functionally, acyl-CoA synthases catalyze the initial reaction in fatty acid metabolism, by forming a thioester with CoA. Has some preference toward medium-chain substrates. Plays a role in adipocyte differentiation. The protein is Medium-chain acyl-CoA ligase ACSF2, mitochondrial of Macaca fascicularis (Crab-eating macaque).